A 135-amino-acid polypeptide reads, in one-letter code: Ribonuclease P protein component (135 aa).

Belongs to the RnpA family. In terms of assembly, consists of a catalytic RNA component (M1 or rnpB) and a protein subunit.

The catalysed reaction is Endonucleolytic cleavage of RNA, removing 5'-extranucleotides from tRNA precursor.. Functionally, RNaseP catalyzes the removal of the 5'-leader sequence from pre-tRNA to produce the mature 5'-terminus. It can also cleave other RNA substrates such as 4.5S RNA. The protein component plays an auxiliary but essential role in vivo by binding to the 5'-leader sequence and broadening the substrate specificity of the ribozyme. In Xylella fastidiosa (strain 9a5c), this protein is Ribonuclease P protein component.